Consider the following 217-residue polypeptide: PTB-containing, cubilin and LRP1-interacting protein (217 aa).

Residues 60–217 (VTYLGKVSTT…ASQELESDDG (158 aa)) enclose the PID domain. The segment at 194–217 (KSDGRIHRSSSSEEASQELESDDG) is disordered. Phosphoserine is present on residues serine 202, serine 203, and serine 214. Residues 208–217 (ASQELESDDG) show a composition bias toward acidic residues.

As to quaternary structure, found in a complex with PID1/PCLI1, LRP1 and CUBNI. Interacts with LRP1 and CUBN.

It is found in the cytoplasm. In terms of biological role, increases proliferation of preadipocytes without affecting adipocytic differentiation. The protein is PTB-containing, cubilin and LRP1-interacting protein (Pid1) of Mus musculus (Mouse).